Here is a 147-residue protein sequence, read N- to C-terminus: MYQAIPYSSTRPWLRPEPAASVVDVVKVETTTAVAGRGGEAEVVGEEEAAEVRRAVAESPVLVVGRRGCCLIHVVKRLLQGLGVNPAVHEVAGEAALKGVVPAGGEAAALPAVFVGGKLLGGLDRLMAVHISGELVPILKKAGALWL.

The Glutaredoxin domain maps to 49-146 (AAEVRRAVAE…PILKKAGALW (98 aa)). A [2Fe-2S] cluster-binding site is contributed by Cys69. The Responsive for interaction with TGA factors motif lies at 144 to 147 (ALWL).

The protein belongs to the glutaredoxin family. CC-type subfamily.

The protein localises to the cytoplasm. The protein resides in the nucleus. May only reduce GSH-thiol disulfides, but not protein disulfides. The chain is Monothiol glutaredoxin-S5 (GRXS5) from Oryza sativa subsp. japonica (Rice).